The chain runs to 389 residues: Succinate--CoA ligase [ADP-forming] subunit beta (389 aa).

The ATP-grasp domain occupies 9–236; the sequence is RDLFEAHGVP…ERTEDPLEAK (228 aa). ATP is bound by residues Lys45, 52–54, Ala94, and Glu99; that span reads GRG. Residues Asn191 and Asp205 each contribute to the Mg(2+) site. Substrate contacts are provided by residues Asn256 and 318-320; that span reads GIT.

This sequence belongs to the succinate/malate CoA ligase beta subunit family. As to quaternary structure, heterotetramer of two alpha and two beta subunits. It depends on Mg(2+) as a cofactor.

The enzyme catalyses succinate + ATP + CoA = succinyl-CoA + ADP + phosphate. It catalyses the reaction GTP + succinate + CoA = succinyl-CoA + GDP + phosphate. It participates in carbohydrate metabolism; tricarboxylic acid cycle; succinate from succinyl-CoA (ligase route): step 1/1. Its function is as follows. Succinyl-CoA synthetase functions in the citric acid cycle (TCA), coupling the hydrolysis of succinyl-CoA to the synthesis of either ATP or GTP and thus represents the only step of substrate-level phosphorylation in the TCA. The beta subunit provides nucleotide specificity of the enzyme and binds the substrate succinate, while the binding sites for coenzyme A and phosphate are found in the alpha subunit. The polypeptide is Succinate--CoA ligase [ADP-forming] subunit beta (Micrococcus luteus (strain ATCC 4698 / DSM 20030 / JCM 1464 / CCM 169 / CCUG 5858 / IAM 1056 / NBRC 3333 / NCIMB 9278 / NCTC 2665 / VKM Ac-2230) (Micrococcus lysodeikticus)).